The following is a 45-amino-acid chain: Photosystem I reaction center subunit IX 1 (45 aa).

The helical transmembrane segment at Trp-9 to Val-29 threads the bilayer.

Belongs to the PsaJ family.

Its subcellular location is the cellular thylakoid membrane. In terms of biological role, may help in the organization of the PsaE and PsaF subunits. The protein is Photosystem I reaction center subunit IX 1 of Prochlorococcus marinus (strain NATL1A).